A 37-amino-acid chain; its full sequence is Large ribosomal subunit protein bL36c (37 aa).

It belongs to the bacterial ribosomal protein bL36 family.

It localises to the plastid. Its subcellular location is the chloroplast. The polypeptide is Large ribosomal subunit protein bL36c (rpl36) (Euglena gracilis).